We begin with the raw amino-acid sequence, 338 residues long: Malate dehydrogenase, mitochondrial (338 aa).

Residues 1-24 constitute a mitochondrion transit peptide; that stretch reads MLSALARPAGAALRRSFSTSXQNN. NAD(+)-binding positions include 31–37 and aspartate 57; that span reads GASGGIG. A glycan (O-linked (GlcNAc) serine) is linked at serine 33. N6-acetyllysine; alternate is present on residues lysine 78 and lysine 91. N6-succinyllysine; alternate is present on residues lysine 78 and lysine 91. Substrate-binding residues include arginine 104 and arginine 110. NAD(+)-binding positions include asparagine 117 and 140–142; that span reads ISN. Substrate is bound at residue asparagine 142. Lysine 165 bears the N6-acetyllysine mark. Arginine 176 serves as a coordination point for substrate. The residue at position 185 (lysine 185) is an N6-acetyllysine; alternate. Residue lysine 185 is modified to N6-succinyllysine; alternate. The Proton acceptor role is filled by histidine 200. N6-succinyllysine is present on lysine 203. An N6-acetyllysine; alternate mark is found at lysine 215 and lysine 239. Lysine 215 and lysine 239 each carry N6-succinyllysine; alternate. An N6-malonyllysine; alternate modification is found at lysine 239. Residue serine 246 is modified to Phosphoserine. Position 251 (methionine 251) interacts with NAD(+). An N6-succinyllysine modification is found at lysine 269. 5 positions are modified to N6-acetyllysine; alternate: lysine 296, lysine 301, lysine 307, lysine 314, and lysine 324. N6-succinyllysine; alternate is present on residues lysine 296, lysine 301, lysine 307, lysine 314, and lysine 324. Lysine 307 bears the N6-malonyllysine; alternate mark. Residue serine 326 is modified to Phosphoserine. N6-acetyllysine; alternate is present on residues lysine 328, lysine 329, and lysine 335. Lysine 328 carries the post-translational modification N6-succinyllysine; alternate. Lysine 329 bears the N6-malonyllysine; alternate mark. An N6-succinyllysine; alternate modification is found at lysine 335.

It belongs to the LDH/MDH superfamily. MDH type 1 family. Homodimer. In terms of processing, acetylation is enhanced after treatment either with trichostin A (TCA) or with nicotinamide (NAM) with the appearance of tri- and tetraacetylations. Glucose also increases acetylation.

It is found in the mitochondrion matrix. The catalysed reaction is (S)-malate + NAD(+) = oxaloacetate + NADH + H(+). With respect to regulation, enzyme activity is enhanced by acetylation. This is Malate dehydrogenase, mitochondrial (MDH2) from Sus scrofa (Pig).